Here is a 1325-residue protein sequence, read N- to C-terminus: Nephrocystin-3 (1325 aa).

Residues M1–Y20 form a disordered region. G2 is lipidated: N-myristoyl glycine. Residues S107–V203 are a coiled coil. TPR repeat units follow at residues T467–L500, C881–M914, T916–L937, A938–A971, A980–A1013, A1022–A1055, A1088–V1121, A1130–A1163, A1172–S1205, A1214–S1247, and G1256–E1289. A disordered region spans residues L1293–S1325. The span at S1299–S1325 shows a compositional bias: polar residues.

In terms of assembly, interacts with NPHP1 and INVS/NPHP2. Interacts (when myristoylated) with UNC119 and UNC119B; interaction is required for localization to cilium. Interacts with CEP164. Component of a complex containing at least ANKS6, INVS, NEK8 and NPHP3. ANKS6 may organize complex assembly by linking INVS and NPHP3 to NEK8 and INVS may target the complex to the proximal ciliary axoneme.

It is found in the cell projection. Its subcellular location is the cilium. Required for normal ciliary development and function. Inhibits disheveled-1-induced canonical Wnt-signaling activity and may also play a role in the control of non-canonical Wnt signaling that regulates planar cell polarity. Probably acts as a molecular switch between different Wnt signaling pathways. Required for proper convergent extension cell movements. In Mus musculus (Mouse), this protein is Nephrocystin-3 (Nphp3).